Consider the following 1146-residue polypeptide: MSGIKKEPIESDEVPQQETKNNLPSAPSEMSPLFLNKNTQKAMQSIAPILEGFSPKTSASENMSLKLPPPGIQDDHSEENLTVHDTLQRTISTALGNGNNTNTVTTSGLKKADSESKSEADPEGLSNSNIVNDADNINSISKTGSPHLPQGTMDAEQTNMGTNSVPTSSASSRKSSTSHPKPRLPKVGKIGVCAMDAKVLSKPMRHILNRLIEHGEFETVIFGDKVILDERIENWPTCDFLISFFSSGFPLDKAIKYVKLRKPFIINDLIMQKILWDRRLCLQVLEAYNVPTPPRLEISRDGGPRANEELRAKLREHGVEVKPVEEPEWKMVDDDTLEVDGKTMTKPFVEKPVDGEDHNIYIYYHSKNGGGGRRLFRKVGNKSSEFDPTLVHPRTEGSYIYEQFMDTDNFEDVKAYTIGENFCHAETRKSPVVDGIVRRNTHGKEVRYITELSDEEKTIAGKVSKAFSQMICGFDLLRVSGKSYVIDVNGFSFVKDNKAYYDSCANILRSTFIEAKKKMDMEKKNLPIIREEKEQKWVFKGLAIIIRHADRTPKQKFKHSFTSPIFISLLKGHKEEVVIRNVNDLKIVLQALRIALDEKAGNPAKIKVLANALEKKLNFPGTKIQLKPVLNKENEVEKVQFILKWGGEPTHSAKYQATELGEQMRQDFDLLNKSILQNIKIFSSSERRVLHTAQYWTRALFGADELGSDEISIRKDLLDDSNAAKDLMDKVKKKLKPLLREGKEAPPQFAWPSKMPEPYLVIKRVVELMNYHKKIMDNNFAKKDVNSMQTRWCTSEDPSLFKERWDKLFKEFNNAEKVDPSKISELYDTMKYDALHNRQFLENIFDPGLPNEAIADELGSHSLVDRYPINVLAKNNFKIIDSHSMNNSGKNSSNSVGSLGWVLESGKTSTARNPKSSSQFDEPRFMQLRELYKLAKVLFDFICPKEYGISDAEKLDIGLLTSLPLAKQILNDIGDMKNRETPACVAYFTKESHIYTLLNIIYESGIPMRIARNALPELDYLSQITFELYESTDASGQKSHSIRLKMSPGCHTQDPLDVQLDDRHYISCIPKISLTKHLDMDYVQQKLRNKFTRVIMPPKFTPVNITSPNLSFQKRKTRRKSVSVEKLKRPASSGSSSSTSVNKTLD.

Residues 1–33 form a disordered region; the sequence is MSGIKKEPIESDEVPQQETKNNLPSAPSEMSPL. Over residues 16-25 the composition is skewed to polar residues; the sequence is QQETKNNLPS. Phosphoserine occurs at positions 31, 54, and 77. The disordered stretch occupies residues 93-185; it reads TALGNGNNTN…STSHPKPRLP (93 aa). A compositionally biased stretch (low complexity) spans 96-106; it reads GNGNNTNTVTT. Over residues 110 to 120 the composition is skewed to basic and acidic residues; the sequence is KKADSESKSEA. A compositionally biased stretch (polar residues) spans 125 to 144; that stretch reads LSNSNIVNDADNINSISKTG. The span at 164–178 shows a compositional bias: low complexity; it reads SVPTSSASSRKSSTS. 197 to 198 is a substrate binding site; sequence AK. ATP contacts are provided by residues Arg-278, Lys-351, His-358, Arg-377, 402-405, and 412-414; these read EQFM and DVK. 377-378 lines the substrate pocket; the sequence is RK. 2 residues coordinate substrate: Lys-414 and Arg-428. ATP contacts are provided by residues Ser-430, Asp-475, and 487 to 489; that span reads DVN. 492–495 contacts substrate; that stretch reads SFVK. Residues 530–597 are polyphosphoinositide-binding domain; it reads REEKEQKWVF…VLQALRIALD (68 aa). 2 positions are modified to phosphoserine: Ser-895 and Ser-1107. The segment at 1106–1146 is disordered; the sequence is TSPNLSFQKRKTRRKSVSVEKLKRPASSGSSSSTSVNKTLD.

The protein belongs to the histidine acid phosphatase family. VIP1 subfamily.

It localises to the cytoplasm. The protein resides in the cytoskeleton. The catalysed reaction is 1D-myo-inositol hexakisphosphate + ATP = 1-diphospho-1D-myo-inositol 2,3,4,5,6-pentakisphosphate + ADP. It catalyses the reaction 5-diphospho-1D-myo-inositol 1,2,3,4,6-pentakisphosphate + ATP + H(+) = 1,5-bis(diphospho)-1D-myo-inositol 2,3,4,6-tetrakisphosphate + ADP. Functionally, bifunctional inositol kinase that acts in concert with the IP6K kinases to synthesize the diphosphate group-containing inositol pyrophosphates diphosphoinositol pentakisphosphate, PP-InsP5, and bis-diphosphoinositol tetrakisphosphate, (PP)2-InsP4. Phosphorylates inositol hexakisphosphate (InsP6) at position 1 to produce PP-InsP5 which is in turn phosphorylated by IP6Ks to produce (PP)2-InsP4. Alternatively, phosphorylates PP-InsP5 at position 1, produced by IP6Ks from InsP6, to produce (PP)2-InsP4. Required for maintaining cellular integrity, normal growth and interactions with the ARP complex. Acts as a regulator of the PHO80-PHO85 cyclin/cyclin-dependent kinase (CDK) complex, thereby regulating signaling of phosphate availability. Required for the function of the cortical actin cytoskeleton, possibly by participating in correct F-actin localization and ensuring polarized growth. Regulates polarized growth and modulates interphase microtubule cytoskeleton. Regulates microtubule dynamics without the requirement of microtubule plus-end tracking protein Mal3. Required for growth zone selection. The chain is Inositol hexakisphosphate and diphosphoinositol-pentakisphosphate kinase from Saccharomyces cerevisiae (strain ATCC 204508 / S288c) (Baker's yeast).